We begin with the raw amino-acid sequence, 108 residues long: Small ribosomal subunit protein bS16 (108 aa).

It belongs to the bacterial ribosomal protein bS16 family.

The protein is Small ribosomal subunit protein bS16 of Orientia tsutsugamushi (strain Boryong) (Rickettsia tsutsugamushi).